The following is a 487-amino-acid chain: MAAAGSSQAPISFGFNRSSKKKLLVSDGEKEEEHEKEYLVGAEGKELLSANPAPESKPLVIPLIHKNRWAKPNKDKEEDAAPQTEDEAVLSQAVKELIEESRRAQEDNSETNQTLSIPLLMQNRMPDGYEDREKVDVSLRPDSAEAADYDVVPVQQYGMAMLRGMGWKEGEGIGRTFKQDVKPLEQKLRPKGLGLGADRSALKHLEPQKPRKPLKPGEEPEEESKGLGTGSAVQIQSGAYKDMYGKVEGIDPDNSRAMITLAIGGKVVTVSLFSLRLVNSAEYTKYAKDLSRLSKVHQESKVEPHRDRTPEKEQGRKGGEKRSESSRNADVKLSKSSGNGDSNNREKRHRQRSPEQEKEKKKIRPEPHGWLRRDIRVRFIDKNYKGGKYYNSKMLVEDVLSPTRCVCRTENGCILEDIRQDMLETIIPKEEGEHVMVVLGKYRGMVGKILHRDKQKSRALVQLQGEHDSAETLSYDAICHYTGAQDD.

3 disordered regions span residues 65 to 121, 181 to 232, and 295 to 367; these read HKNR…PLLM, VKPL…TGSA, and KVHQ…RPEP. The stretch at 88-116 forms a coiled coil; the sequence is AVLSQAVKELIEESRRAQEDNSETNQTLS. 2 stretches are compositionally biased toward basic and acidic residues: residues 96–106 and 200–209; these read ELIEESRRAQE and SALKHLEPQK. Residues 154–200 enclose the G-patch domain; the sequence is VQQYGMAMLRGMGWKEGEGIGRTFKQDVKPLEQKLRPKGLGLGADRS. Residues 226–253 form the KOW 1 domain; sequence GLGTGSAVQIQSGAYKDMYGKVEGIDPD. Composition is skewed to basic and acidic residues over residues 295–333 and 352–367; these read KVHQ…DVKL and RSPE…RPEP. The KOW 2 domain maps to 428–455; it reads PKEEGEHVMVVLGKYRGMVGKILHRDKQ.

This sequence belongs to the MOS2 family. As to quaternary structure, component of the minor spliceosome, which splices U12-type introns.

Its subcellular location is the nucleus. Its function is as follows. RNA-binding protein involved in pre-mRNA splicing. This Xenopus laevis (African clawed frog) protein is G-patch domain and KOW motifs-containing protein (gpkow).